The sequence spans 448 residues: tRNA(Ile)-lysidine synthase (448 aa).

28–33 (STGVDS) contributes to the ATP binding site.

This sequence belongs to the tRNA(Ile)-lysidine synthase family.

It localises to the cytoplasm. It catalyses the reaction cytidine(34) in tRNA(Ile2) + L-lysine + ATP = lysidine(34) in tRNA(Ile2) + AMP + diphosphate + H(+). Functionally, ligates lysine onto the cytidine present at position 34 of the AUA codon-specific tRNA(Ile) that contains the anticodon CAU, in an ATP-dependent manner. Cytidine is converted to lysidine, thus changing the amino acid specificity of the tRNA from methionine to isoleucine. This chain is tRNA(Ile)-lysidine synthase, found in Lactiplantibacillus plantarum (strain ATCC BAA-793 / NCIMB 8826 / WCFS1) (Lactobacillus plantarum).